The following is a 399-amino-acid chain: Alpha-tubulin N-acetyltransferase (399 aa).

In terms of domain architecture, N-acetyltransferase spans 1 to 178; it reads MEFNFIINKL…NNFVVFDQYF (178 aa). Acetyl-CoA contacts are provided by residues 112–125 and 148–157; these read FYVH…GYGK and SPKLIAFLKK. A compositionally biased stretch (polar residues) spans 183 to 193; the sequence is SSQNKQNQNTR. The disordered stretch occupies residues 183–223; it reads SSQNKQNQNTRSYSQPYSDYSSQIPTNYPQQQQQQSNSKSY. A compositionally biased stretch (low complexity) spans 194-223; that stretch reads SYSQPYSDYSSQIPTNYPQQQQQQSNSKSY.

Belongs to the acetyltransferase ATAT1 family.

It carries out the reaction L-lysyl-[alpha-tubulin] + acetyl-CoA = N(6)-acetyl-L-lysyl-[alpha-tubulin] + CoA + H(+). In terms of biological role, specifically acetylates 'Lys-40' in alpha-tubulin on the lumenal side of microtubules. Promotes microtubule destabilization and accelerates microtubule dynamics; this activity may be independent of acetylation activity. Acetylates alpha-tubulin with a slow enzymatic rate, due to a catalytic site that is not optimized for acetyl transfer. Enters the microtubule through each end and diffuses quickly throughout the lumen of microtubules. Acetylates only long/old microtubules because of its slow acetylation rate since it does not have time to act on dynamically unstable microtubules before the enzyme is released. The chain is Alpha-tubulin N-acetyltransferase from Tetrahymena thermophila (strain SB210).